The chain runs to 191 residues: uncharacterized protein (191 aa).

Residues 5–65 (GDSREKILHT…IEAVTYTGKI (61 aa)) form the HTH tetR-type domain. Residues 28 to 47 (GLNQIVKESGAPKGSLYHFF) constitute a DNA-binding region (H-T-H motif).

This is an uncharacterized protein from Bacillus subtilis (strain 168).